A 205-amino-acid polypeptide reads, in one-letter code: Small ribosomal subunit protein uS4 (205 aa).

The 64-residue stretch at 94–157 (SRLDTVVYRM…KQIPLIQESV (64 aa)) folds into the S4 RNA-binding domain.

This sequence belongs to the universal ribosomal protein uS4 family. In terms of assembly, part of the 30S ribosomal subunit. Contacts protein S5. The interaction surface between S4 and S5 is involved in control of translational fidelity.

In terms of biological role, one of the primary rRNA binding proteins, it binds directly to 16S rRNA where it nucleates assembly of the body of the 30S subunit. Functionally, with S5 and S12 plays an important role in translational accuracy. This is Small ribosomal subunit protein uS4 from Rickettsia felis (strain ATCC VR-1525 / URRWXCal2) (Rickettsia azadi).